We begin with the raw amino-acid sequence, 221 residues long: Ribosomal RNA small subunit methyltransferase G (221 aa).

S-adenosyl-L-methionine contacts are provided by residues Gly85, Leu90, 138 to 139 (AE), and Arg151.

Belongs to the methyltransferase superfamily. RNA methyltransferase RsmG family.

It localises to the cytoplasm. It catalyses the reaction guanosine(527) in 16S rRNA + S-adenosyl-L-methionine = N(7)-methylguanosine(527) in 16S rRNA + S-adenosyl-L-homocysteine. In terms of biological role, specifically methylates the N7 position of guanine in position 527 of 16S rRNA. The polypeptide is Ribosomal RNA small subunit methyltransferase G (Caulobacter sp. (strain K31)).